Reading from the N-terminus, the 265-residue chain is H-2 class II histocompatibility antigen, A-Q beta chain (265 aa).

The signal sequence occupies residues 1-27; sequence MALQIPSLLLSAAVVVLMVLSSPRTEG. A beta-1 region spans residues 28-122; it reads GNSERHFVAQ…VETHTSLRRL (95 aa). Residues 28–227 are Extracellular-facing; the sequence is GNSERHFVAQ…AQSESARSKM (200 aa). 2 cysteine pairs are disulfide-bonded: Cys42-Cys106 and Cys145-Cys201. N-linked (GlcNAc...) asparagine glycosylation occurs at Asn46. Residues 123-217 are beta-2; the sequence is EQPNVAISLS…LKSPITVEWR (95 aa). Residues 125-213 enclose the Ig-like C1-type domain; that stretch reads PNVAISLSRT…EHPSLKSPIT (89 aa). Residues 218 to 227 form a connecting peptide region; it reads AQSESARSKM. The chain crosses the membrane as a helical span at residues 228-247; the sequence is LSGIGGCVLGVIFLGLGLFI. Residues 248–265 lie on the Cytoplasmic side of the membrane; sequence RHRSQKGPRGPPPAGLLQ.

This sequence belongs to the MHC class II family. In terms of processing, ubiquitinated in immature dendritic cells leading to down-regulation of MHC class II.

The protein localises to the membrane. This is H-2 class II histocompatibility antigen, A-Q beta chain (H2-Ab1) from Mus musculus (Mouse).